A 240-amino-acid chain; its full sequence is MPVSKCPKKSESLWKGWDRKAQRNGLRSQVYAVNGDYYVGEWKDNVKHGKGTQVWKKKGAIYEGDWKFGKRDGYGTLSLPDQQTGKCRRVYSGWWKGDKKSGYGIQFFGPKEYYEGDWCGSQRSGWGRMYYSNGDIYEGQWENDKPNGEGMLRLKNGNRYEGCWERGMKNGAGRFFHLDHGQLFEGFWVDNMAKCGTMIDFGRDEAPEPTQFPIPEVKILDPDGVLAEALAMFRKTEEGD.

Residues 6 to 35 (CPKKSESLWKGWDRKAQRNGLRSQVYAVNG) form an interaction with MDM2 region. MORN repeat units follow at residues 38–60 (YVGEWKDNVKHGKGTQVWKKKGA), 62–84 (YEGDWKFGKRDGYGTLSLPDQQT), 91–113 (YSGWWKGDKKSGYGIQFFGPKEY), 114–136 (YEGDWCGSQRSGWGRMYYSNGDI), 137–159 (YEGQWENDKPNGEGMLRLKNGNR), 160–182 (YEGCWERGMKNGAGRFFHLDHGQ), and 184–205 (FEGFWVDNMAKCGTMIDFGRDE). The segment at 76-100 (TLSLPDQQTGKCRRVYSGWWKGDKK) is interaction with SIRT1. An interaction with TP53 region spans residues 206-240 (APEPTQFPIPEVKILDPDGVLAEALAMFRKTEEGD).

In terms of assembly, interacts with MEIG1. Interacts with TP53, MDM2 and SIRT1; the interactions mediate post-transcriptional modifications of TP53 by MDM2 and SIRT1.

The protein localises to the cytoplasmic vesicle. It localises to the secretory vesicle. The protein resides in the acrosome. Functionally, assembles a suppression complex (suppresome) by tethering SIRT1 and MDM2 to regulate composite modifications of p53/TP53. Confers both deacetylation-mediated functional inactivation, by SIRT1, and ubiquitination-dependent degradation, by MDM2, of p53/TP53, promoting a proliferative and cell survival behaviors. May play a role in the regulation of spermatogenesis. The polypeptide is MORN repeat-containing protein 3 (Homo sapiens (Human)).